We begin with the raw amino-acid sequence, 242 residues long: Small ribosomal subunit protein uS2 (242 aa).

Belongs to the universal ribosomal protein uS2 family.

This is Small ribosomal subunit protein uS2 from Idiomarina loihiensis (strain ATCC BAA-735 / DSM 15497 / L2-TR).